The primary structure comprises 28 residues: Ribosome-inactivating protein pleuturegin (28 aa).

This sequence belongs to the ribosome-inactivating protein family.

It catalyses the reaction Endohydrolysis of the N-glycosidic bond at one specific adenosine on the 28S rRNA.. Its function is as follows. Inhibits protein synthesis in animal cells. Does not possess ribonuclease activity. In Pleurotus tuber-regium (King tuber oyster mushroom), this protein is Ribosome-inactivating protein pleuturegin.